Reading from the N-terminus, the 311-residue chain is Malate dehydrogenase (311 aa).

NAD(+) is bound by residues 7 to 13 (GAAGGIG) and aspartate 34. 2 residues coordinate substrate: arginine 81 and arginine 87. NAD(+)-binding positions include asparagine 94 and 117–119 (ITN). Residues asparagine 119 and arginine 153 each coordinate substrate. Catalysis depends on histidine 177, which acts as the Proton acceptor. Methionine 227 contacts NAD(+).

It belongs to the LDH/MDH superfamily. MDH type 1 family. In terms of assembly, homodimer.

It carries out the reaction (S)-malate + NAD(+) = oxaloacetate + NADH + H(+). Functionally, catalyzes the reversible oxidation of malate to oxaloacetate. This chain is Malate dehydrogenase, found in Shewanella pealeana (strain ATCC 700345 / ANG-SQ1).